A 316-amino-acid polypeptide reads, in one-letter code: Serpentine receptor class gamma-8 (316 aa).

7 consecutive transmembrane segments (helical) span residues 28–48 (FVQVAYLAPAVFLYSRILYVV), 60–80 (PFFMVYSMVGLILVLLDIFIT), 106–126 (LYYPLLNYLHCAQPFIQIFLT), 147–167 (FSRILILNLIAPFFFIWNTII), 186–206 (IIPWASMSLFLFIIRSAVVMI), 235–255 (ACAANSICFLVPAVFEAMKVL), and 267–287 (LVQPFAWDVLNVGSPLVMIFA).

This sequence belongs to the nematode receptor-like protein srg family.

The protein resides in the membrane. This chain is Serpentine receptor class gamma-8 (srg-8), found in Caenorhabditis elegans.